The primary structure comprises 571 residues: Proline--tRNA ligase (571 aa).

The protein belongs to the class-II aminoacyl-tRNA synthetase family. ProS type 1 subfamily. As to quaternary structure, homodimer.

The protein localises to the cytoplasm. It catalyses the reaction tRNA(Pro) + L-proline + ATP = L-prolyl-tRNA(Pro) + AMP + diphosphate. Functionally, catalyzes the attachment of proline to tRNA(Pro) in a two-step reaction: proline is first activated by ATP to form Pro-AMP and then transferred to the acceptor end of tRNA(Pro). As ProRS can inadvertently accommodate and process non-cognate amino acids such as alanine and cysteine, to avoid such errors it has two additional distinct editing activities against alanine. One activity is designated as 'pretransfer' editing and involves the tRNA(Pro)-independent hydrolysis of activated Ala-AMP. The other activity is designated 'posttransfer' editing and involves deacylation of mischarged Ala-tRNA(Pro). The misacylated Cys-tRNA(Pro) is not edited by ProRS. This chain is Proline--tRNA ligase, found in Vibrio vulnificus (strain YJ016).